The chain runs to 235 residues: Aspartate/glutamate leucyltransferase (235 aa).

Belongs to the R-transferase family. Bpt subfamily.

The protein resides in the cytoplasm. The enzyme catalyses N-terminal L-glutamyl-[protein] + L-leucyl-tRNA(Leu) = N-terminal L-leucyl-L-glutamyl-[protein] + tRNA(Leu) + H(+). It catalyses the reaction N-terminal L-aspartyl-[protein] + L-leucyl-tRNA(Leu) = N-terminal L-leucyl-L-aspartyl-[protein] + tRNA(Leu) + H(+). Its function is as follows. Functions in the N-end rule pathway of protein degradation where it conjugates Leu from its aminoacyl-tRNA to the N-termini of proteins containing an N-terminal aspartate or glutamate. The chain is Aspartate/glutamate leucyltransferase from Pseudomonas fluorescens (strain Pf0-1).